The primary structure comprises 708 residues: Ion-translocating oxidoreductase complex subunit C (708 aa).

4Fe-4S ferredoxin-type domains follow at residues 369-397 (GEPQ…QQLY) and 407-436 (KATT…VQYF). [4Fe-4S] cluster contacts are provided by cysteine 377, cysteine 380, cysteine 383, cysteine 387, cysteine 416, cysteine 419, cysteine 422, and cysteine 426. The interval 630 to 682 (AKARKLEQQQANAEPEEQIDPRKAAVEAAIARAKARKLEQQQANAEPEEQIDP) is disordered.

Belongs to the 4Fe4S bacterial-type ferredoxin family. RnfC subfamily. In terms of assembly, the complex is composed of six subunits: RsxA, RsxB, RsxC, RsxD, RsxE and RsxG. [4Fe-4S] cluster serves as cofactor.

It localises to the cell inner membrane. Functionally, part of a membrane-bound complex that couples electron transfer with translocation of ions across the membrane. Required to maintain the reduced state of SoxR. This is Ion-translocating oxidoreductase complex subunit C from Escherichia coli O1:K1 / APEC.